The primary structure comprises 366 residues: Chalcone synthase B (366 aa).

Residue Cys-172 is part of the active site.

The protein belongs to the thiolase-like superfamily. Chalcone/stilbene synthases family.

It catalyses the reaction (E)-4-coumaroyl-CoA + 3 malonyl-CoA + 3 H(+) = 2',4,4',6'-tetrahydroxychalcone + 3 CO2 + 4 CoA. The protein operates within secondary metabolite biosynthesis; flavonoid biosynthesis. Its function is as follows. The primary product of this enzyme is 4,2',4',6'-tetrahydroxychalcone (also termed naringenin-chalcone or chalcone) which can under specific conditions spontaneously isomerize into naringenin. The chain is Chalcone synthase B (CHSB) from Ipomoea triloba (Trilobed morning glory).